The chain runs to 1239 residues: WD repeat-containing protein 11 (1239 aa).

WD repeat units lie at residues 63-112 (RHKA…AHCE), 115-158 (EHSK…KLWK), 358-398 (TKTV…SKSS), 476-515 (RMCP…LHKE), 571-610 (NDEP…LLRE), 713-750 (GSMG…SRGV), 752-792 (THRG…MVSS), 798-836 (NVNY…ASYR), and 898-944 (SLSN…IQAF). The interval 1213–1239 (EDLSQTEGTGTESSPADDTDNSLVNIE) is disordered. The span at 1215 to 1226 (LSQTEGTGTESS) shows a compositional bias: polar residues.

Component of the complex WDR11.

Its subcellular location is the cytoplasm. The protein resides in the cytoskeleton. It localises to the cilium basal body. It is found in the nucleus. The protein localises to the cilium axoneme. Its subcellular location is the cytoplasmic vesicle. The protein resides in the golgi apparatus. It localises to the trans-Golgi network. Functionally, involved in the Hedgehog (Hh) signaling pathway, is essential for normal ciliogenesis. Regulates the proteolytic processing of gli3 and cooperates with the transcription factor emx1 in the induction of downstream Hh pathway gene expression and gonadotropin-releasing hormone production. WDR11 complex facilitates the tethering of Adaptor protein-1 complex (AP-1)-derived vesicles. This Danio rerio (Zebrafish) protein is WD repeat-containing protein 11 (wdr11).